The primary structure comprises 522 residues: Amphoterin-induced protein 2 (522 aa).

A signal peptide spans 1–39 (MSLRVHTLPTLLGAVVRPGCRELLCLLMITVTVGPGASG). One can recognise an LRRNT domain in the interval 40-68 (VCPTACICATDIVSCTNKNLSKVPGNLFR). At 40 to 398 (VCPTACICAT…RSHAHEAFNT (359 aa)) the chain is on the extracellular side. Disulfide bonds link Cys-41/Cys-47 and Cys-45/Cys-54. Asn-58 carries N-linked (GlcNAc...) asparagine glycosylation. LRR repeat units lie at residues 69–90 (LIKR…WIPV), 94–115 (KLNT…SFST), 118–139 (NLKC…VFQE), 142–163 (VLEV…AFGG), 166–187 (QLQK…LYVG), and 193–214 (ELMF…HINL). Residue Asn-104 is glycosylated (N-linked (GlcNAc...) asparagine). Residues 228–284 (NPFVCDCSLYSLLVFWYRRHFSSVMDFKNDYTCRLWSDSRHSRQVLLLQDSFMNCSD) enclose the LRRCT domain. Cystine bridges form between Cys-232–Cys-260 and Cys-234–Cys-282. 6 N-linked (GlcNAc...) asparagine glycosylation sites follow: Asn-281, Asn-288, Asn-345, Asn-373, Asn-381, and Asn-384. An Ig-like C2-type domain is found at 289-379 (GSFRALGFIH…RLLNETVDVT (91 aa)). An intrachain disulfide couples Cys-310 to Cys-363. The chain crosses the membrane as a helical span at residues 399 to 419 (AFTTLAACVASIVLVLLYLYL). The Cytoplasmic portion of the chain corresponds to 420 to 522 (TPCPCKCKTK…FSDTPFVAST (103 aa)). A disordered region spans residues 501–522 (RGKSDSDSVNSVFSDTPFVAST).

It belongs to the immunoglobulin superfamily. AMIGO family. As to quaternary structure, binds itself as well as AMIGO1 and AMIGO3. Highest levels in breast, ovary, cervix, and uterus. Lower levels in lung, colon, and rectum. Differentially expressed in 56% of thyroid, 57% of pancreatic and 45% of stomach cancers.

The protein resides in the cell membrane. Its subcellular location is the nucleus. Its function is as follows. Required for depolarization-dependent survival of cultured cerebellar granule neurons. May mediate homophilic as well as heterophilic cell-cell interaction with AMIGO1 or AMIGO3. May contribute to signal transduction through its intracellular domain. May be required for tumorigenesis of a subset of gastric adenocarcinomas. This is Amphoterin-induced protein 2 from Homo sapiens (Human).